The following is a 208-amino-acid chain: Putative ADP-ribose pyrophosphatase YjhB (208 aa).

The Nudix hydrolase domain maps to 69–195 (TPKADVRGAV…NTPSQLSMLF (127 aa)). The Nudix box signature appears at 100–121 (GFCEIGLSPAENVVKEIKEESG). Positions 115 and 119 each coordinate Mg(2+).

It belongs to the Nudix hydrolase family. It depends on Mg(2+) as a cofactor. Mn(2+) is required as a cofactor.

Functionally, probably mediates the hydrolysis of some nucleoside diphosphate derivatives. The protein is Putative ADP-ribose pyrophosphatase YjhB (yjhB) of Bacillus subtilis (strain 168).